Here is a 238-residue protein sequence, read N- to C-terminus: Probable transcriptional regulatory protein SAB0618 (238 aa).

Belongs to the TACO1 family. YeeN subfamily.

The protein resides in the cytoplasm. This is Probable transcriptional regulatory protein SAB0618 from Staphylococcus aureus (strain bovine RF122 / ET3-1).